Here is a 231-residue protein sequence, read N- to C-terminus: Urease subunit gamma/beta (231 aa).

Residues Met1–Pro101 form a urease gamma region. The urease beta stretch occupies residues Gly102–Ala231.

It in the N-terminal section; belongs to the urease gamma subunit family. This sequence in the C-terminal section; belongs to the urease beta subunit family. Heterohexamer of 3 UreC (alpha) and 3 UreAB (gamma/beta) subunits.

Its subcellular location is the cytoplasm. The enzyme catalyses urea + 2 H2O + H(+) = hydrogencarbonate + 2 NH4(+). Its pathway is nitrogen metabolism; urea degradation; CO(2) and NH(3) from urea (urease route): step 1/1. The protein is Urease subunit gamma/beta of Pseudomonas syringae pv. tomato (strain ATCC BAA-871 / DC3000).